A 162-amino-acid polypeptide reads, in one-letter code: SsrA-binding protein (162 aa).

The span at 137-154 (HDKREDTKAREWDREKAR) shows a compositional bias: basic and acidic residues. Residues 137–162 (HDKREDTKAREWDREKARIMKNKHRG) form a disordered region.

The protein belongs to the SmpB family.

Its subcellular location is the cytoplasm. Functionally, required for rescue of stalled ribosomes mediated by trans-translation. Binds to transfer-messenger RNA (tmRNA), required for stable association of tmRNA with ribosomes. tmRNA and SmpB together mimic tRNA shape, replacing the anticodon stem-loop with SmpB. tmRNA is encoded by the ssrA gene; the 2 termini fold to resemble tRNA(Ala) and it encodes a 'tag peptide', a short internal open reading frame. During trans-translation Ala-aminoacylated tmRNA acts like a tRNA, entering the A-site of stalled ribosomes, displacing the stalled mRNA. The ribosome then switches to translate the ORF on the tmRNA; the nascent peptide is terminated with the 'tag peptide' encoded by the tmRNA and targeted for degradation. The ribosome is freed to recommence translation, which seems to be the essential function of trans-translation. This Aeromonas hydrophila subsp. hydrophila (strain ATCC 7966 / DSM 30187 / BCRC 13018 / CCUG 14551 / JCM 1027 / KCTC 2358 / NCIMB 9240 / NCTC 8049) protein is SsrA-binding protein.